We begin with the raw amino-acid sequence, 364 residues long: DNA replication and repair protein RecF (364 aa).

An ATP-binding site is contributed by glycine 30–threonine 37.

The protein belongs to the RecF family.

It is found in the cytoplasm. The RecF protein is involved in DNA metabolism; it is required for DNA replication and normal SOS inducibility. RecF binds preferentially to single-stranded, linear DNA. It also seems to bind ATP. This Pseudoalteromonas translucida (strain TAC 125) protein is DNA replication and repair protein RecF.